Reading from the N-terminus, the 151-residue chain is D-aminoacyl-tRNA deacylase (151 aa).

The short motif at 137–138 is the Gly-cisPro motif, important for rejection of L-amino acids element; the sequence is GP.

This sequence belongs to the DTD family. In terms of assembly, homodimer.

Its subcellular location is the cytoplasm. The catalysed reaction is glycyl-tRNA(Ala) + H2O = tRNA(Ala) + glycine + H(+). The enzyme catalyses a D-aminoacyl-tRNA + H2O = a tRNA + a D-alpha-amino acid + H(+). Its function is as follows. An aminoacyl-tRNA editing enzyme that deacylates mischarged D-aminoacyl-tRNAs. Also deacylates mischarged glycyl-tRNA(Ala), protecting cells against glycine mischarging by AlaRS. Acts via tRNA-based rather than protein-based catalysis; rejects L-amino acids rather than detecting D-amino acids in the active site. By recycling D-aminoacyl-tRNA to D-amino acids and free tRNA molecules, this enzyme counteracts the toxicity associated with the formation of D-aminoacyl-tRNA entities in vivo and helps enforce protein L-homochirality. The chain is D-aminoacyl-tRNA deacylase from Listeria monocytogenes serotype 4a (strain HCC23).